We begin with the raw amino-acid sequence, 231 residues long: Thiamine import ATP-binding protein ThiQ (231 aa).

One can recognise an ABC transporter domain in the interval 2-230 (LRLEDLDIRK…PPPALRGYLG (229 aa)). ATP is bound at residue 32–39 (GPSGAGKS).

It belongs to the ABC transporter superfamily. Thiamine importer (TC 3.A.1.19.1) family. In terms of assembly, the complex is composed of two ATP-binding proteins (ThiQ), two transmembrane proteins (ThiP) and a solute-binding protein (ThiB).

The protein localises to the cell inner membrane. The enzyme catalyses thiamine(out) + ATP + H2O = thiamine(in) + ADP + phosphate + H(+). In terms of biological role, part of the ABC transporter complex ThiBPQ involved in thiamine import. Responsible for energy coupling to the transport system. This Ruegeria sp. (strain TM1040) (Silicibacter sp.) protein is Thiamine import ATP-binding protein ThiQ.